The following is a 352-amino-acid chain: MEKYEKIGKIGEGSYGVVFKCRNRDTGQIVAIKRFLETEDDPVIKKIALREIRMLKQLKHPNLVSLLEVFRRKRRLHLVFEYCHHTVLHELDRYQRGVPEPLVKNITWQTLQAVNFCHKHNCIHRDVKPENILITKHSVIKLCDFGFARLLTGPGDYYTDYVATRWYRSPELLVGDTQYGPPVDVWAIGCVFAELLSGVPLWPGKSDVDQLYLIRKTLGDLIPRHQQVFSMNQYFSGVKIPDPEDMETLELKFPNISYSALGFLKGCLHMDPAERLTCEQLLQHPYFDSIRDVGELARPHDKPTRKTLRQSRKHLTGLQHLPQLTSSSVLPALDRKKYHCGTRNFNYHFPNI.

Positions 4–287 constitute a Protein kinase domain; it reads YEKIGKIGEG…CEQLLQHPYF (284 aa). ATP contacts are provided by residues 10 to 18 and Lys-33; that span reads IGEGSYGVV. Positions 45–51 match the [NKR]KIAxRE motif; sequence KKIALRE. Asp-126 acts as the Proton acceptor in catalysis.

It belongs to the protein kinase superfamily. CMGC Ser/Thr protein kinase family. CDC2/CDKX subfamily.

It localises to the cytoplasm. The protein resides in the nucleus. The catalysed reaction is L-seryl-[protein] + ATP = O-phospho-L-seryl-[protein] + ADP + H(+). It carries out the reaction L-threonyl-[protein] + ATP = O-phospho-L-threonyl-[protein] + ADP + H(+). The chain is Cyclin-dependent kinase-like 1 from Rattus norvegicus (Rat).